Consider the following 135-residue polypeptide: Helix-loop-helix protein 2 (135 aa).

The segment at 1-80 is disordered; the sequence is MMLSPDQAAD…RRRATAKYRS (80 aa). The segment covering 10–21 has biased composition (basic and acidic residues); that stretch reads DSDHPSSAHSDP. Positions 68–80 are enriched in basic residues; sequence KRRRRRATAKYRS. In terms of domain architecture, bHLH spans 77-129; that stretch reads KYRSAHATRERIRVEAFNLAFAELRKLLPTLPPDKKLSKIEILRLAICYISYL.

As to quaternary structure, homodimer. Interacts and may form heterodimers with STAT3.

The protein localises to the nucleus. Its function is as follows. Transcription factor which binds the E box motif 5'-CA[TC][AG]TG-3'. Involved in regulating energy expenditure, body mass, voluntary physical activity, mating behavior and reproductive longevity, acting through the hypothalamic-pituitary-gonadal axis. Acts as a transcriptional activator of target genes, including NDN, PCSK1, MC4R. Is also a transcriptional activator of KISS1. May act centrally to regulate function of both white and brown adipose tissue. Together with NHLH1, required to maintain migration and survival of cells in the anterior extramural migration stream (aes), which forms the precerebellar nuclei. Also, in concert with NHLH1, may determine fate of gonadotropin releasing hormone-1 (GnRH-1) neurons. The chain is Helix-loop-helix protein 2 (NHLH2) from Homo sapiens (Human).